A 130-amino-acid polypeptide reads, in one-letter code: UPF0251 protein MmarC5_0986 (130 aa).

It belongs to the UPF0251 family.

The protein is UPF0251 protein MmarC5_0986 of Methanococcus maripaludis (strain C5 / ATCC BAA-1333).